The primary structure comprises 134 residues: ATP synthase epsilon chain (134 aa).

Belongs to the ATPase epsilon chain family. As to quaternary structure, F-type ATPases have 2 components, CF(1) - the catalytic core - and CF(0) - the membrane proton channel. CF(1) has five subunits: alpha(3), beta(3), gamma(1), delta(1), epsilon(1). CF(0) has three main subunits: a, b and c.

It localises to the cell membrane. In terms of biological role, produces ATP from ADP in the presence of a proton gradient across the membrane. The protein is ATP synthase epsilon chain of Listeria welshimeri serovar 6b (strain ATCC 35897 / DSM 20650 / CCUG 15529 / CIP 8149 / NCTC 11857 / SLCC 5334 / V8).